Consider the following 622-residue polypeptide: Chaperone protein HscA homolog (622 aa).

This sequence belongs to the heat shock protein 70 family.

Its function is as follows. Chaperone involved in the maturation of iron-sulfur cluster-containing proteins. Has a low intrinsic ATPase activity which is markedly stimulated by HscB. This Acidovorax sp. (strain JS42) protein is Chaperone protein HscA homolog.